The chain runs to 63 residues: MTETAQAPLDPRLLSVLVCPVTKGPLIYDREAGELISRQAGLAFPIRDGIPIMLPDEARPLDV.

It belongs to the UPF0434 family.

The sequence is that of UPF0434 protein GDI0182/Gdia_2252 from Gluconacetobacter diazotrophicus (strain ATCC 49037 / DSM 5601 / CCUG 37298 / CIP 103539 / LMG 7603 / PAl5).